We begin with the raw amino-acid sequence, 107 residues long: Nucleoid-associated protein RBE_0048 (107 aa).

It belongs to the YbaB/EbfC family. Homodimer.

It is found in the cytoplasm. It localises to the nucleoid. Functionally, binds to DNA and alters its conformation. May be involved in regulation of gene expression, nucleoid organization and DNA protection. In Rickettsia bellii (strain RML369-C), this protein is Nucleoid-associated protein RBE_0048.